The following is a 188-amino-acid chain: Pyridoxal 5'-phosphate synthase subunit PdxT (188 aa).

47-49 is an L-glutamine binding site; the sequence is GES. Cys79 functions as the Nucleophile in the catalytic mechanism. L-glutamine is bound by residues Arg106 and 134-135; that span reads IR. Catalysis depends on charge relay system residues His169 and Glu171.

It belongs to the glutaminase PdxT/SNO family. In terms of assembly, in the presence of PdxS, forms a dodecamer of heterodimers. Only shows activity in the heterodimer.

The catalysed reaction is aldehydo-D-ribose 5-phosphate + D-glyceraldehyde 3-phosphate + L-glutamine = pyridoxal 5'-phosphate + L-glutamate + phosphate + 3 H2O + H(+). The enzyme catalyses L-glutamine + H2O = L-glutamate + NH4(+). Its pathway is cofactor biosynthesis; pyridoxal 5'-phosphate biosynthesis. Its function is as follows. Catalyzes the hydrolysis of glutamine to glutamate and ammonia as part of the biosynthesis of pyridoxal 5'-phosphate. The resulting ammonia molecule is channeled to the active site of PdxS. In Caldicellulosiruptor bescii (strain ATCC BAA-1888 / DSM 6725 / KCTC 15123 / Z-1320) (Anaerocellum thermophilum), this protein is Pyridoxal 5'-phosphate synthase subunit PdxT.